Consider the following 81-residue polypeptide: Ferredoxin (81 aa).

The region spanning 2–30 is the 4Fe-4S ferredoxin-type domain; the sequence is KYTIVDKETCIACGACGAAAPDIYDYDED. [4Fe-4S] cluster-binding residues include Cys11, Cys14, Cys17, and Cys61.

[4Fe-4S] cluster serves as cofactor.

Ferredoxins are iron-sulfur proteins that transfer electrons in a wide variety of metabolic reactions. The polypeptide is Ferredoxin (Bacillus thermoproteolyticus).